The following is a 369-amino-acid chain: tRNA 2-selenouridine synthase (369 aa).

One can recognise a Rhodanese domain in the interval 12-136 (FLDDIPLMDV…LRNFLFETTR (125 aa)). Cysteine 95 acts as the S-selanylcysteine intermediate in catalysis.

This sequence belongs to the SelU family. As to quaternary structure, monomer.

The enzyme catalyses 5-methylaminomethyl-2-thiouridine(34) in tRNA + selenophosphate + (2E)-geranyl diphosphate + H2O + H(+) = 5-methylaminomethyl-2-selenouridine(34) in tRNA + (2E)-thiogeraniol + phosphate + diphosphate. The catalysed reaction is 5-methylaminomethyl-2-thiouridine(34) in tRNA + (2E)-geranyl diphosphate = 5-methylaminomethyl-S-(2E)-geranyl-thiouridine(34) in tRNA + diphosphate. It carries out the reaction 5-methylaminomethyl-S-(2E)-geranyl-thiouridine(34) in tRNA + selenophosphate + H(+) = 5-methylaminomethyl-2-(Se-phospho)selenouridine(34) in tRNA + (2E)-thiogeraniol. It catalyses the reaction 5-methylaminomethyl-2-(Se-phospho)selenouridine(34) in tRNA + H2O = 5-methylaminomethyl-2-selenouridine(34) in tRNA + phosphate. Its function is as follows. Involved in the post-transcriptional modification of the uridine at the wobble position (U34) of tRNA(Lys), tRNA(Glu) and tRNA(Gln). Catalyzes the conversion of 2-thiouridine (S2U-RNA) to 2-selenouridine (Se2U-RNA). Acts in a two-step process involving geranylation of 2-thiouridine (S2U) to S-geranyl-2-thiouridine (geS2U) and subsequent selenation of the latter derivative to 2-selenouridine (Se2U) in the tRNA chain. This chain is tRNA 2-selenouridine synthase, found in Pseudomonas aeruginosa (strain LESB58).